Here is an 862-residue protein sequence, read N- to C-terminus: DNA mismatch repair protein MutS (862 aa).

Position 618 to 625 (618 to 625 (GPNMGGKS)) interacts with ATP. A disordered region spans residues 799 to 824 (QLESRDNQASPAVASAPQQQSLSLSP). Positions 806 to 824 (QASPAVASAPQQQSLSLSP) are enriched in low complexity.

It belongs to the DNA mismatch repair MutS family.

Functionally, this protein is involved in the repair of mismatches in DNA. It is possible that it carries out the mismatch recognition step. This protein has a weak ATPase activity. This is DNA mismatch repair protein MutS from Shewanella denitrificans (strain OS217 / ATCC BAA-1090 / DSM 15013).